An 89-amino-acid polypeptide reads, in one-letter code: Small ribosomal subunit protein uS15 (89 aa).

It belongs to the universal ribosomal protein uS15 family. As to quaternary structure, part of the 30S ribosomal subunit. Forms a bridge to the 50S subunit in the 70S ribosome, contacting the 23S rRNA.

One of the primary rRNA binding proteins, it binds directly to 16S rRNA where it helps nucleate assembly of the platform of the 30S subunit by binding and bridging several RNA helices of the 16S rRNA. Its function is as follows. Forms an intersubunit bridge (bridge B4) with the 23S rRNA of the 50S subunit in the ribosome. The polypeptide is Small ribosomal subunit protein uS15 (Nostoc sp. (strain PCC 7120 / SAG 25.82 / UTEX 2576)).